The sequence spans 137 residues: Profilin-3 (137 aa).

The protein belongs to the profilin family. As to quaternary structure, interacts with ACTRT3. Detected in round spermatids.

The protein localises to the cytoplasm. Its subcellular location is the cytoskeleton. It is found in the nucleus. In terms of biological role, binds to actin and affects the structure of the cytoskeleton. Slightly reduces actin polymerization. Binds to poly-L-proline, phosphatidylinositol 3-phosphate (PtdIns(3)P), phosphatidylinositol 4,5-bisphosphate (PtdIns(4,5)P2), and phosphatidylinositol 4-phosphate (PtdIns(4)P). May be involved in spermatogenesis. In Rattus norvegicus (Rat), this protein is Profilin-3 (Pfn3).